Consider the following 117-residue polypeptide: Protein P16 (117 aa).

The helical transmembrane segment at 7–24 threads the bilayer; sequence LYWVGGGLVLILIWLWFR.

It is found in the virion membrane. In terms of biological role, protein of the infection vertex complex, which increases the vertex stability. Anchors the vertex structure to the viral membrane. Essential for viral infectivity. The sequence is that of Protein P16 (XVI) from Enterobacteria phage PRD1 (Bacteriophage PRD1).